Reading from the N-terminus, the 336-residue chain is Ketol-acid reductoisomerase (NADP(+)) 1 (336 aa).

Residues 2–181 (AKVYYEKDVT…GATRAGVLET (180 aa)) form the KARI N-terminal Rossmann domain. NADP(+) is bound by residues 25–28 (YGSQ), Arg-48, Ser-52, and 82–85 (DELQ). The active site involves His-107. Position 133 (Gly-133) interacts with NADP(+). Residues 182–327 (TFKEETETDL…RKLREMMPFV (146 aa)) form the KARI C-terminal knotted domain. Residues Asp-190, Glu-194, Glu-226, and Glu-230 each contribute to the Mg(2+) site. Ser-251 lines the substrate pocket.

Belongs to the ketol-acid reductoisomerase family. Mg(2+) is required as a cofactor.

It catalyses the reaction (2R)-2,3-dihydroxy-3-methylbutanoate + NADP(+) = (2S)-2-acetolactate + NADPH + H(+). It carries out the reaction (2R,3R)-2,3-dihydroxy-3-methylpentanoate + NADP(+) = (S)-2-ethyl-2-hydroxy-3-oxobutanoate + NADPH + H(+). The protein operates within amino-acid biosynthesis; L-isoleucine biosynthesis; L-isoleucine from 2-oxobutanoate: step 2/4. Its pathway is amino-acid biosynthesis; L-valine biosynthesis; L-valine from pyruvate: step 2/4. Its function is as follows. Involved in the biosynthesis of branched-chain amino acids (BCAA). Catalyzes an alkyl-migration followed by a ketol-acid reduction of (S)-2-acetolactate (S2AL) to yield (R)-2,3-dihydroxy-isovalerate. In the isomerase reaction, S2AL is rearranged via a Mg-dependent methyl migration to produce 3-hydroxy-3-methyl-2-ketobutyrate (HMKB). In the reductase reaction, this 2-ketoacid undergoes a metal-dependent reduction by NADPH to yield (R)-2,3-dihydroxy-isovalerate. This Bacillus cereus (strain ATCC 14579 / DSM 31 / CCUG 7414 / JCM 2152 / NBRC 15305 / NCIMB 9373 / NCTC 2599 / NRRL B-3711) protein is Ketol-acid reductoisomerase (NADP(+)) 1.